The primary structure comprises 416 residues: Imidazolonepropionase (416 aa).

H81 and H83 together coordinate Fe(3+). Zn(2+) contacts are provided by H81 and H83. 4-imidazolone-5-propanoate contacts are provided by R90, Y153, and H186. Y153 serves as a coordination point for N-formimidoyl-L-glutamate. H251 provides a ligand contact to Fe(3+). Residue H251 participates in Zn(2+) binding. Q254 provides a ligand contact to 4-imidazolone-5-propanoate. Fe(3+) is bound at residue D326. D326 provides a ligand contact to Zn(2+). N-formimidoyl-L-glutamate contacts are provided by N328 and G330. Position 331 (T331) interacts with 4-imidazolone-5-propanoate.

This sequence belongs to the metallo-dependent hydrolases superfamily. HutI family. Zn(2+) is required as a cofactor. Requires Fe(3+) as cofactor.

It is found in the cytoplasm. The enzyme catalyses 4-imidazolone-5-propanoate + H2O = N-formimidoyl-L-glutamate. The protein operates within amino-acid degradation; L-histidine degradation into L-glutamate; N-formimidoyl-L-glutamate from L-histidine: step 3/3. Its function is as follows. Catalyzes the hydrolytic cleavage of the carbon-nitrogen bond in imidazolone-5-propanoate to yield N-formimidoyl-L-glutamate. It is the third step in the universal histidine degradation pathway. The polypeptide is Imidazolonepropionase (Paracidovorax citrulli (strain AAC00-1) (Acidovorax citrulli)).